Consider the following 193-residue polypeptide: Mesogenin-1 (193 aa).

Positions 34–59 (GPFELNQASPSQSLSPAPSLESYSSS) are disordered. Over residues 40–59 (QASPSQSLSPAPSLESYSSS) the composition is skewed to low complexity. Positions 124–178 (QRRRKASEREKLRMRTLADALHTLRNYLPPVYSQRGQPLTKIQTLKYTIKYIGEL) constitute a bHLH domain.

It localises to the nucleus. Its function is as follows. Involved in specifying the paraxial, but not dorsal, mesoderm. May regulate the expression of T-box transcription factors required for mesoderm formation and differentiation. The protein is Mesogenin-1 (MSGN1) of Homo sapiens (Human).